Here is a 271-residue protein sequence, read N- to C-terminus: Non-homologous end joining protein Ku (271 aa).

The Ku domain maps to 12–194 (KLSLVTCPVV…DQKPVPELLS (183 aa)). The segment at 225-249 (EAKKTPPAKKTKAEEKTGKGSAESN) is disordered.

This sequence belongs to the prokaryotic Ku family. In terms of assembly, homodimer. Interacts with LigD.

Its function is as follows. With LigD forms a non-homologous end joining (NHEJ) DNA repair enzyme, which repairs dsDNA breaks with reduced fidelity. Binds linear dsDNA with 5'- and 3'- overhangs but not closed circular dsDNA nor ssDNA. Recruits and stimulates the ligase activity of LigD. The chain is Non-homologous end joining protein Ku from Methylocella silvestris (strain DSM 15510 / CIP 108128 / LMG 27833 / NCIMB 13906 / BL2).